A 485-amino-acid polypeptide reads, in one-letter code: D-alanine--D-alanyl carrier protein ligase (485 aa).

ATP is bound at residue 144–145 (TS). D189 provides a ligand contact to D-alanine. 284–289 (NTYGPT) provides a ligand contact to ATP. A D-alanine-binding site is contributed by V293. ATP is bound by residues D365 and K473. K473 is a D-alanine binding site.

The protein belongs to the ATP-dependent AMP-binding enzyme family. DltA subfamily.

It localises to the cytoplasm. The enzyme catalyses holo-[D-alanyl-carrier protein] + D-alanine + ATP = D-alanyl-[D-alanyl-carrier protein] + AMP + diphosphate. Its pathway is cell wall biogenesis; lipoteichoic acid biosynthesis. Catalyzes the first step in the D-alanylation of lipoteichoic acid (LTA), the activation of D-alanine and its transfer onto the D-alanyl carrier protein (Dcp) DltC. In an ATP-dependent two-step reaction, forms a high energy D-alanyl-AMP intermediate, followed by transfer of the D-alanyl residue as a thiol ester to the phosphopantheinyl prosthetic group of the Dcp. D-alanylation of LTA plays an important role in modulating the properties of the cell wall in Gram-positive bacteria, influencing the net charge of the cell wall. In Staphylococcus aureus (strain Mu3 / ATCC 700698), this protein is D-alanine--D-alanyl carrier protein ligase.